The sequence spans 495 residues: Glycerol kinase (495 aa).

Residue T11 participates in ADP binding. Residues T11, T12, and S13 each contribute to the ATP site. Residue T11 coordinates sn-glycerol 3-phosphate. R15 is a binding site for ADP. R81, E82, Y133, and D242 together coordinate sn-glycerol 3-phosphate. Glycerol contacts are provided by R81, E82, Y133, D242, and Q243. ADP-binding residues include T264 and G307. ATP contacts are provided by T264, G307, Q311, and G409. G409 and N413 together coordinate ADP.

It belongs to the FGGY kinase family.

It catalyses the reaction glycerol + ATP = sn-glycerol 3-phosphate + ADP + H(+). The protein operates within polyol metabolism; glycerol degradation via glycerol kinase pathway; sn-glycerol 3-phosphate from glycerol: step 1/1. Inhibited by fructose 1,6-bisphosphate (FBP). Functionally, key enzyme in the regulation of glycerol uptake and metabolism. Catalyzes the phosphorylation of glycerol to yield sn-glycerol 3-phosphate. This Borrelia hermsii (strain HS1 / DAH) protein is Glycerol kinase.